The sequence spans 253 residues: Mitochondrial inner membrane protease ATP23 (253 aa).

The tract at residues 1–23 is disordered; sequence MSKNADLEAIPAAEEIKKPNPPK. A compositionally biased stretch (basic and acidic residues) spans 14 to 23; that stretch reads EEIKKPNPPK. His-152 contacts a divalent metal cation. The active site involves Glu-153. His-156 contacts a divalent metal cation.

The protein belongs to the peptidase M76 family.

It is found in the mitochondrion inner membrane. In terms of biological role, has a dual role in the assembly of mitochondrial ATPase. Acts as a protease that removes N-terminal residues of mitochondrial ATPase CF(0) subunit 6 at the intermembrane space side. Also involved in the correct assembly of the membrane-embedded ATPase CF(0) particle, probably mediating association of subunit 6 with the subunit 9 ring. The chain is Mitochondrial inner membrane protease ATP23 (ATP23) from Vanderwaltozyma polyspora (strain ATCC 22028 / DSM 70294 / BCRC 21397 / CBS 2163 / NBRC 10782 / NRRL Y-8283 / UCD 57-17) (Kluyveromyces polysporus).